The primary structure comprises 528 residues: Peptide chain release factor 3 (528 aa).

Residues 10-279 (AKRRTFAIIS…GLVEWAPAPM (270 aa)) enclose the tr-type G domain. Residues 19–26 (SHPDAGKT), 87–91 (DTPGH), and 141–144 (NKLD) each bind GTP.

The protein belongs to the TRAFAC class translation factor GTPase superfamily. Classic translation factor GTPase family. PrfC subfamily.

Its subcellular location is the cytoplasm. Increases the formation of ribosomal termination complexes and stimulates activities of RF-1 and RF-2. It binds guanine nucleotides and has strong preference for UGA stop codons. It may interact directly with the ribosome. The stimulation of RF-1 and RF-2 is significantly reduced by GTP and GDP, but not by GMP. The polypeptide is Peptide chain release factor 3 (Escherichia coli O1:K1 / APEC).